A 360-amino-acid chain; its full sequence is Phospho-N-acetylmuramoyl-pentapeptide-transferase (360 aa).

10 consecutive transmembrane segments (helical) span residues 26-46, 72-92, 94-114, 132-152, 168-188, 199-219, 236-256, 263-283, 288-308, and 338-358; these read AIVS…RMIA, PTMG…LWAY, SNPY…IGFV, WKYF…YLAG, VMPQ…VGTG, GLAI…AWAT, AGEL…FLWF, VFMG…IAVL, FLLV…ILQV, and VIVR…ATLK.

Belongs to the glycosyltransferase 4 family. MraY subfamily. Requires Mg(2+) as cofactor.

The protein resides in the cell inner membrane. The catalysed reaction is UDP-N-acetyl-alpha-D-muramoyl-L-alanyl-gamma-D-glutamyl-meso-2,6-diaminopimeloyl-D-alanyl-D-alanine + di-trans,octa-cis-undecaprenyl phosphate = di-trans,octa-cis-undecaprenyl diphospho-N-acetyl-alpha-D-muramoyl-L-alanyl-D-glutamyl-meso-2,6-diaminopimeloyl-D-alanyl-D-alanine + UMP. It functions in the pathway cell wall biogenesis; peptidoglycan biosynthesis. Its function is as follows. Catalyzes the initial step of the lipid cycle reactions in the biosynthesis of the cell wall peptidoglycan: transfers peptidoglycan precursor phospho-MurNAc-pentapeptide from UDP-MurNAc-pentapeptide onto the lipid carrier undecaprenyl phosphate, yielding undecaprenyl-pyrophosphoryl-MurNAc-pentapeptide, known as lipid I. In Citrobacter koseri (strain ATCC BAA-895 / CDC 4225-83 / SGSC4696), this protein is Phospho-N-acetylmuramoyl-pentapeptide-transferase.